Consider the following 239-residue polypeptide: Transmembrane ascorbate ferrireductase 1 (239 aa).

The Cytoplasmic segment spans residues 1 to 7 (MAVRINA). Residues 8 to 28 (MAVTFVAHALAVIAAIMVLVW) form a helical membrane-spanning segment. One can recognise a Cytochrome b561 domain in the interval 13 to 216 (VAHALAVIAA…FGAFVVLTAS (204 aa)). At 29 to 45 (SISYRGGLAWEATNKNL) the chain is on the lumenal side. A helical membrane pass occupies residues 46–66 (IFNLHPVLMLIGFIILGGEAI). His-50 lines the heme b pocket. Residues 67–81 (ISYKSLPLEKPVKKL) lie on the Cytoplasmic side of the membrane. A helical membrane pass occupies residues 82–102 (IHLILHAIALALGIFGICAAF). Residues His-83 and His-117 each contribute to the heme b site. Residues 103 to 119 (KNHNESHIPNLYSLHSW) are Lumenal-facing. A helical transmembrane segment spans residues 120-140 (IGIGVISLYGFQWVYSFIVFF). Over 141–155 (FPGGSTNLKSGLLPW) the chain is Cytoplasmic. His-156 is a heme b binding site. Residues 156–176 (HAMLGLFVYILAVGNAALGFL) form a helical membrane-spanning segment. The Lumenal portion of the chain corresponds to 177 to 193 (EKLTFLENGGLDKYGSE). The chain crosses the membrane as a helical span at residues 194–214 (AFLINFTAIITILFGAFVVLT). Residues 215–239 (ASAESPSPSPSVSNDDSVDFSYSAI) lie on the Cytoplasmic side of the membrane. Positions 217-239 (AESPSPSPSVSNDDSVDFSYSAI) are disordered. The span at 224–239 (PSVSNDDSVDFSYSAI) shows a compositional bias: low complexity.

In terms of assembly, homodimer. Requires heme b as cofactor. As to expression, expressed in roots, seedlings and leaves. Lower expression in flowers. Expressed in the L1 layer of the shoot apex, in the epidermis of leaf primordia and young leaves and in vascular bundles. In the differentiation zone of the root, detected in the pericycle and in the epidermis, but not in the cortex. Strongly expressed in the lateral part of the root cap and in the epidermis of the root tip, but not in the meristematic tissue. Not expressed in lateral roots. In mature embryos, expressed in the epidermis, cotyledon tips and root tips.

It is found in the vacuole membrane. The enzyme catalyses Fe(3+)(out) + L-ascorbate(in) = monodehydro-L-ascorbate radical(in) + Fe(2+)(out) + H(+). In terms of biological role, two-heme-containing cytochrome. Catalyzes ascorbate-dependent trans-membrane ferric-chelate reduction. Able to use dihydrolipoic acid (DHLA) as an alternative substrate to ascorbate. The sequence is that of Transmembrane ascorbate ferrireductase 1 (CYB561A) from Arabidopsis thaliana (Mouse-ear cress).